A 433-amino-acid polypeptide reads, in one-letter code: Trigger factor (433 aa).

A PPIase FKBP-type domain is found at 163–248 (GDTVNIDFSG…VNEIKFKDVP (86 aa)).

This sequence belongs to the FKBP-type PPIase family. Tig subfamily.

Its subcellular location is the cytoplasm. The catalysed reaction is [protein]-peptidylproline (omega=180) = [protein]-peptidylproline (omega=0). Functionally, involved in protein export. Acts as a chaperone by maintaining the newly synthesized protein in an open conformation. Functions as a peptidyl-prolyl cis-trans isomerase. The chain is Trigger factor from Staphylococcus epidermidis (strain ATCC 35984 / DSM 28319 / BCRC 17069 / CCUG 31568 / BM 3577 / RP62A).